Consider the following 855-residue polypeptide: Lon protease (855 aa).

The 244-residue stretch at 45–288 folds into the Lon N-terminal domain; it reads IYLLTVKNVV…ETFRFLNIEY (244 aa). 439–446 contacts ATP; the sequence is GPPGVGKT. Residues 674 to 855 form the Lon proteolytic domain; it reads IQVPGVVTGL…NEVIDLSIIK (182 aa). Catalysis depends on residues Ser-761 and Lys-804.

It belongs to the peptidase S16 family. Homohexamer. Organized in a ring with a central cavity.

The protein localises to the cytoplasm. It catalyses the reaction Hydrolysis of proteins in presence of ATP.. Its function is as follows. ATP-dependent serine protease that mediates the selective degradation of mutant and abnormal proteins as well as certain short-lived regulatory proteins. Required for cellular homeostasis and for survival from DNA damage and developmental changes induced by stress. Degrades polypeptides processively to yield small peptide fragments that are 5 to 10 amino acids long. Binds to DNA in a double-stranded, site-specific manner. This is Lon protease from Karelsulcia muelleri (strain GWSS) (Sulcia muelleri).